Here is a 185-residue protein sequence, read N- to C-terminus: Large ribosomal subunit protein uL5 (185 aa).

This sequence belongs to the universal ribosomal protein uL5 family. Part of the 50S ribosomal subunit; part of the 5S rRNA/L5/L18/L25 subcomplex. Contacts the 5S rRNA and the P site tRNA. Forms a bridge to the 30S subunit in the 70S ribosome.

In terms of biological role, this is one of the proteins that bind and probably mediate the attachment of the 5S RNA into the large ribosomal subunit, where it forms part of the central protuberance. In the 70S ribosome it contacts protein S13 of the 30S subunit (bridge B1b), connecting the 2 subunits; this bridge is implicated in subunit movement. Contacts the P site tRNA; the 5S rRNA and some of its associated proteins might help stabilize positioning of ribosome-bound tRNAs. The sequence is that of Large ribosomal subunit protein uL5 from Treponema pallidum (strain Nichols).